Consider the following 262-residue polypeptide: Hydroxyethylthiazole kinase (262 aa).

M39 is a binding site for substrate. ATP-binding residues include K115 and T160. G187 serves as a coordination point for substrate.

Belongs to the Thz kinase family. Requires Mg(2+) as cofactor.

It catalyses the reaction 5-(2-hydroxyethyl)-4-methylthiazole + ATP = 4-methyl-5-(2-phosphooxyethyl)-thiazole + ADP + H(+). It functions in the pathway cofactor biosynthesis; thiamine diphosphate biosynthesis; 4-methyl-5-(2-phosphoethyl)-thiazole from 5-(2-hydroxyethyl)-4-methylthiazole: step 1/1. In terms of biological role, catalyzes the phosphorylation of the hydroxyl group of 4-methyl-5-beta-hydroxyethylthiazole (THZ). This chain is Hydroxyethylthiazole kinase, found in Staphylococcus epidermidis (strain ATCC 12228 / FDA PCI 1200).